The following is an 86-amino-acid chain: UPF0180 protein CA_C1486 (86 aa).

It belongs to the UPF0180 family.

This is UPF0180 protein CA_C1486 from Clostridium acetobutylicum (strain ATCC 824 / DSM 792 / JCM 1419 / IAM 19013 / LMG 5710 / NBRC 13948 / NRRL B-527 / VKM B-1787 / 2291 / W).